The sequence spans 186 residues: Fucolectin-6 (186 aa).

Residues 1 to 32 form the signal peptide; the sequence is MKTCNLTDRMKVKMIMLLFQILAISTLQSVSA. Positions 40-186 are F5/8 type C-like; it reads QENVAVRGKA…VEVNAMLPAN (147 aa). Ca(2+)-binding residues include N67, D70, N72, and S81. 3 disulfides stabilise this stretch: C82/C175, C114/C115, and C137/C153. Alpha-L-fucose contacts are provided by H84 and R111. The Cell attachment site motif lies at 111-113; sequence RGD. R118 serves as a coordination point for alpha-L-fucose. Residues C175 and E176 each coordinate Ca(2+).

This sequence belongs to the fucolectin family. As to quaternary structure, homotrimer. As to expression, gill mucous cells.

The protein resides in the secreted. Acts as a defensive agent. Recognizes blood group fucosylated oligosaccharides including A, B, H and Lewis B-type antigens. Does not recognize Lewis A antigen and has low affinity for monovalent haptens. This Anguilla japonica (Japanese eel) protein is Fucolectin-6.